The sequence spans 927 residues: Protein unc-45 homolog B (927 aa).

TPR repeat units lie at residues 4–37 (PVQLKEEGNKYFQSNEYGQAIQCYSKALKLITDK), 41–74 (AVLYRNRSACYLKQDNYVQAAADASKAIDVDASD), and 76–108 (KALFRRCQALEKLGKLDQAYKDVQRCATLEPKN). ARM repeat units follow at residues 167–206 (DAGAEQIFQNNGVNLLMQLIESKDPEMILSAIRTLSGMCT), 209–248 (RARATAIVHLVGINKICSIMAVDNEEIALAACNLLQNIVD), and 746–785 (DKLRQKIIKEKALPEIENYMFENHEQIRQAATECMCNLAL).

In terms of tissue distribution, detected initially throughout the somites and the heart and gradually also expressed in the jaw, branchial arches and body wall muscles at later embryonic stages.

It is found in the cytoplasm. It localises to the myofibril. The protein resides in the sarcomere. Its subcellular location is the z line. The protein localises to the a band. It is found in the perinuclear region. It localises to the cytosol. In terms of biological role, acts as a co-chaperone for HSP90 and is required for proper folding of the myosin motor domain. Plays a role in sarcomere formation during muscle cell development. Is necessary for normal early lens development. This chain is Protein unc-45 homolog B, found in Xenopus tropicalis (Western clawed frog).